The chain runs to 158 residues: Endoribonuclease YbeY (158 aa).

Zn(2+)-binding residues include histidine 119, histidine 123, and aspartate 129.

Belongs to the endoribonuclease YbeY family. Zn(2+) serves as cofactor.

The protein localises to the cytoplasm. In terms of biological role, single strand-specific metallo-endoribonuclease involved in late-stage 70S ribosome quality control and in maturation of the 3' terminus of the 16S rRNA. The protein is Endoribonuclease YbeY of Chlamydia caviae (strain ATCC VR-813 / DSM 19441 / 03DC25 / GPIC) (Chlamydophila caviae).